We begin with the raw amino-acid sequence, 419 residues long: Serine hydroxymethyltransferase (419 aa).

Residues Leu121 and 125-127 (GHL) contribute to the (6S)-5,6,7,8-tetrahydrofolate site. At Lys229 the chain carries N6-(pyridoxal phosphate)lysine. 354–356 (SPF) provides a ligand contact to (6S)-5,6,7,8-tetrahydrofolate.

The protein belongs to the SHMT family. Homodimer. Requires pyridoxal 5'-phosphate as cofactor.

The protein localises to the cytoplasm. The catalysed reaction is (6R)-5,10-methylene-5,6,7,8-tetrahydrofolate + glycine + H2O = (6S)-5,6,7,8-tetrahydrofolate + L-serine. The protein operates within one-carbon metabolism; tetrahydrofolate interconversion. It functions in the pathway amino-acid biosynthesis; glycine biosynthesis; glycine from L-serine: step 1/1. Its function is as follows. Catalyzes the reversible interconversion of serine and glycine with tetrahydrofolate (THF) serving as the one-carbon carrier. This reaction serves as the major source of one-carbon groups required for the biosynthesis of purines, thymidylate, methionine, and other important biomolecules. Also exhibits THF-independent aldolase activity toward beta-hydroxyamino acids, producing glycine and aldehydes, via a retro-aldol mechanism. This chain is Serine hydroxymethyltransferase, found in Coxiella burnetii (strain CbuG_Q212) (Coxiella burnetii (strain Q212)).